Consider the following 242-residue polypeptide: UPF0246 protein SPP_1571 (242 aa).

This sequence belongs to the UPF0246 family.

In Streptococcus pneumoniae (strain P1031), this protein is UPF0246 protein SPP_1571.